The sequence spans 209 residues: Large ribosomal subunit protein uL3 (209 aa).

Positions 133 to 152 (THGNSLSHRVPGSIGQNQTP) are disordered. The residue at position 150 (glutamine 150) is an N5-methylglutamine.

This sequence belongs to the universal ribosomal protein uL3 family. As to quaternary structure, part of the 50S ribosomal subunit. Forms a cluster with proteins L14 and L19. Post-translationally, methylated by PrmB.

Functionally, one of the primary rRNA binding proteins, it binds directly near the 3'-end of the 23S rRNA, where it nucleates assembly of the 50S subunit. The polypeptide is Large ribosomal subunit protein uL3 (Yersinia enterocolitica serotype O:8 / biotype 1B (strain NCTC 13174 / 8081)).